We begin with the raw amino-acid sequence, 736 residues long: MLSVNTIKNTLLAAVLVSVPATAQVSGNGHPNLIVTEQDVANIAASWESYDAYAEQLNADKTNLDAFMAEGVVVPMPKDAGGGYTHEQHKRNYKAIRNAGFLYQVTGDEKYLTFAKDLLLAYAKMYPSLGEHPNRKEQSPGRLFWQSLNEAVWLVYSIQGYDAIIDGLAAEEKQEIESGVFLPMAKFLSVESPETFNKIHNHGTWAVAAVGMTGYVLGNDELVEISLMGLDKTGKAGFMKQLDKLFSPDGYYTEGPYYQRYALMPFIWFAKAIETNEPERKIFEYRNNILLKAVYTTIDLSYAGYFFPINDALKDKGIDTVELVHALAIVYSITGDNTLLDIAQEQGRISLTGDGLKVAKAVGEGLTQPYNYRSILLGDGADGDQGALSIHRLGEGHNHMALVAKNTSQGMGHGHFDKLNWLLYDNGNEIVTDYGAARYLNVEAKYGGHYLAENNTWAKQTIAHNTLVVNEQSHFYGDVTTADLHHPEVLSFYSGEDYQLSSAKEANAYDGVEFVRSMLLVNVPSLEHPIVVDVLNVSADKASTFDLPLYFNGQIIDFSFKVKDNKNVMKMLGKRNGYQHLWLRNTAPVGDASERATWILDDRFYSYAFVTSTPSKKQNVLIAELGANDPNYNLRQQQVLIRRVEKAKQASFVSVLEPHGKYDGSLETTSGAYSNVKSVKHVSENGKDVVVVDLKDGSNVVVALSYNANSEQVHKVNAGEEAIEWKGFSSVVVRRK.

The N-terminal stretch at 1–23 (MLSVNTIKNTLLAAVLVSVPATA) is a signal peptide. Substrate is bound by residues K136, 146–149 (QSLN), K198, H202, and 257–260 (YYQR). Y258 acts as the Proton donor in catalysis. The active-site Proton acceptor is the H413. Positions 415 and 433 each coordinate Zn(2+). R438 contributes to the substrate binding site. Residue H464 coordinates Zn(2+). Position 667 (E667) interacts with substrate.

This sequence belongs to the polysaccharide lyase 17 family. In terms of assembly, homodimer. It depends on Zn(2+) as a cofactor.

It localises to the periplasm. It catalyses the reaction Cleavage of 4-deoxy-alpha-L-erythro-hex-4-enopyranuronoside oligosaccharides into 4-deoxy-alpha-L-erythro-hex-4-enopyranuronate monosaccharides.. Functionally, catalyzes the depolymerization of alginate through an exolytic mode of action, via a beta-elimination mechanism. Preferentially acts on oligoalginates with degrees of polymerization higher than 2 to produce the alginate monomer, 4-deoxy-L-erythro-5-hexoseulose uronic acid. The sequence is that of Exo-oligoalginate lyase from Saccharophagus degradans (strain 2-40 / ATCC 43961 / DSM 17024).